The primary structure comprises 462 residues: MAEGEEPEKKRRRIEELNEKMVVDGGSGDRSEWQGRWDHVRKFLERTGPFTHPDFEASTESLQFLLDTCKILVIGAGGLGCELLKDLALSGFRHIHVVDMDTIDVSNLNRQFLFRPKDVGRPKAEVAADFVNDRVPGCSVVPHFKKIQDLDETFYRQFHIVVCGLDSVIARRWMNGMLLSLLIYEDGVLDPSSIIPLIDGGTEGFKGNARVILPGMTACIDCTLELYPPQINFPMCTIASMPRLPEHCVEYVRMLLWPKEKPFGDGVVLDGDDPKHIQWVYQKSLERAAEFNITGVTYRLTQGVVKRIIPAVASTNAVIAAACATEVFKIATSAYVPLNNYLVFNDVDGLYTYTFEAERKENCSACSQVPQDMQFTPSAKLQEVLDYLTENASLQMKSPAITTTLDGKNKTLYLQTVASIEERTRPNLSKTLKELGLVDGQELAVADVTTPQTVLFKLKFIS.

Positions 52-69 (HPDFEASTESLQFLLDTC) are interaction with ube2m N-terminus. ATP-binding positions include 99–123 (DMDT…GRPK) and 147–170 (IQDL…SVIA). Interaction with ube2m N-terminus regions lie at residues 156-160 (RQFHI) and 191-216 (PSSI…LPGM). The tract at residues 226–228 (LYP) is interaction with nedd8. The active-site Glycyl thioester intermediate is Cys-236. Interaction with nae1 stretches follow at residues 241–247 (MPRLPEH) and 291–294 (FNIT). The tract at residues 330-337 (IATSAYVP) is interaction with ube2m N-terminus. Residues 351-356 (YTYTFE) are interaction with nedd8. The interaction with ube2m core domain stretch occupies residues 367–462 (SQVPQDMQFT…TVLFKLKFIS (96 aa)).

The protein belongs to the ubiquitin-activating E1 family. UBA3 subfamily. Heterodimer of uba3 and nae1. Interacts with nedd8, ube2f and ube2m.

It carries out the reaction ATP + [NEDD8 protein] + [E1 NEDD8-activating enzyme]-L-cysteine = AMP + diphosphate + [E1 NEDD8-activating enzyme]-S-[NEDD8 protein]-yl-L-cysteine.. Its pathway is protein modification; protein neddylation. Its function is as follows. Catalytic subunit of the dimeric uba3-nae1 E1 enzyme. E1 activates nedd8 by first adenylating its C-terminal glycine residue with ATP, thereafter linking this residue to the side chain of the catalytic cysteine, yielding a nedd8-uba3 thioester and free AMP. E1 finally transfers nedd8 to the catalytic cysteine of ube2m. This Danio rerio (Zebrafish) protein is NEDD8-activating enzyme E1 catalytic subunit (uba3).